Here is a 327-residue protein sequence, read N- to C-terminus: Immediate early response gene 5 protein (327 aa).

2 disordered regions span residues 59 to 166 and 227 to 313; these read GPAG…GVFP and GPAG…DKPV. The segment covering 71–84 has biased composition (low complexity); the sequence is QPGEPAAGPPAGWG. Over residues 253 to 262 the composition is skewed to acidic residues; the sequence is GEDDDAEEME. Polar residues predominate over residues 265–278; that stretch reads NVANLISIFGSSFS.

The protein belongs to the IER family. Monomer. Homodimer. Associates with the catalytic subunit of protein phosphatase PP2A. Interacts (via N- and C-terminal regions) with PPP2R2B. Interacts with PPP2R2A, PPP2R2C and PPP2R2D. Interacts (via N-terminus) with RPS6KB1. Interacts (via central region) with HSF1; this interaction promotes PPP2CA-induced HSF1 dephosphorylation, leading to enhanced HSF1 transcriptional activity. In terms of tissue distribution, expressed in acute myeloid leukemia (AML) cells.

The protein localises to the nucleus. It is found in the cytoplasm. Functionally, plays a role as a transcription factor. Mediates positive transcriptional regulation of several chaperone genes during the heat shock response in a HSF1-dependent manner. Mediates negative transcriptional regulation of CDC25B expression. Plays a role in the dephosphorylation of the heat shock factor HSF1 and ribosomal protein S6 kinase (S6K) by the protein phosphatase PP2A. Involved in the regulation of cell proliferation and resistance to thermal stress. Involved in the cell cycle checkpoint and survival in response to ionizing radiation. Associates with chromatin to the CDC25B promoter. The polypeptide is Immediate early response gene 5 protein (IER5) (Homo sapiens (Human)).